A 129-amino-acid polypeptide reads, in one-letter code: D-ribose pyranase (129 aa).

Catalysis depends on histidine 20, which acts as the Proton donor. Substrate-binding positions include aspartate 28, histidine 96, and 118 to 120; that span reads YAN.

The protein belongs to the RbsD / FucU family. RbsD subfamily. Homodecamer.

It is found in the cytoplasm. It catalyses the reaction beta-D-ribopyranose = beta-D-ribofuranose. The protein operates within carbohydrate metabolism; D-ribose degradation; D-ribose 5-phosphate from beta-D-ribopyranose: step 1/2. Its function is as follows. Catalyzes the interconversion of beta-pyran and beta-furan forms of D-ribose. The protein is D-ribose pyranase of Staphylococcus haemolyticus (strain JCSC1435).